The following is a 968-amino-acid chain: RNA polymerase-associated protein RapA (968 aa).

A Helicase ATP-binding domain is found at 164–334 (DVGRRHAPRV…FARLRLLDPN (171 aa)). Residue 177–184 (DEVGLGKT) coordinates ATP. The short motif at 280–283 (DEAH) is the DEAH box element. The Helicase C-terminal domain maps to 490-662 (RVEWLMGYLT…YLASPDQTEG (173 aa)).

Belongs to the SNF2/RAD54 helicase family. RapA subfamily. As to quaternary structure, interacts with the RNAP. Has a higher affinity for the core RNAP than for the holoenzyme. Its ATPase activity is stimulated by binding to RNAP.

Its function is as follows. Transcription regulator that activates transcription by stimulating RNA polymerase (RNAP) recycling in case of stress conditions such as supercoiled DNA or high salt concentrations. Probably acts by releasing the RNAP, when it is trapped or immobilized on tightly supercoiled DNA. Does not activate transcription on linear DNA. Probably not involved in DNA repair. This chain is RNA polymerase-associated protein RapA, found in Escherichia coli O9:H4 (strain HS).